The following is a 635-amino-acid chain: MESPSAHAVSLPEDEELQPWGGAGGPGQHPGRPRSTECAHPGVVEKVRPKWDNPLQFLLVCISYAVGLGNVWRFPYLCQMYGGGNFLVPYIIMLIVEGMPLLYLELAVGQRMRQGSIGAWRTISPYLSGVGIASLVVSFLASVYFNVINTWALWYLFHSFQDPLPWSVCPLNSNHTGYDEECEKASSTQYFWYRKTLNISPSIQENGGVQWEPALCLTLAWLMVYLCILRGTESTGKVVYFTTSLPYFVLIIYLVRGLTLHGATNGLAYMFTPKIEQLANPKAWINAATQIFFSLGLGCGGLIAFASYNEPSNDCQKHALIVSVINSTTAIFSSIVTFSIYGFKATFNYENCLNKVILLLTNSFDLEDGFLTVSNLEEVKNYLASTYPNKYSEVFPHIRNCSLESELDTAVQGTGLAFIVYTEAIKNMEVSQLWSVLYFFMLLTLGMGSMVGTGTAILTPLTDSKIISSYLPKEAISGLVCLLNCAIGMVFTMEAGNYWFDLFNDYTATLSLLLIVLVETIAVCYVYGLKRFESDLRAMTGRTLSWYWKVMWAFVSPLLIVGLFIFYLSDYILTGTLQYQAWDATQGHVVTKDYPTYALAVIGLLVASSTMCIPLVALGTFVTRHFKIREQFSAA.

Residues Met1 to Cys38 form a disordered region. Residues Met1–Gln56 lie on the Cytoplasmic side of the membrane. Residues Phe57 to Leu77 traverse the membrane as a helical segment. Residues Cys78–Asn85 are Extracellular-facing. The helical transmembrane segment at Phe86–Leu106 threads the bilayer. The Cytoplasmic portion of the chain corresponds to Ala107 to Leu127. Residues Ser128–Ile148 traverse the membrane as a helical segment. The Extracellular portion of the chain corresponds to Asn149–Gly208. Asn174 carries an N-linked (GlcNAc...) asparagine glycan. The chain crosses the membrane as a helical span at residues Val209–Leu229. Residues Arg230–Lys237 are Cytoplasmic-facing. Residues Val238 to Leu258 form a helical membrane-spanning segment. Over Thr259 to Trp284 the chain is Extracellular. Residues Ile285–Phe305 traverse the membrane as a helical segment. At Ala306–Ala319 the chain is on the cytoplasmic side. Residues Leu320–Ile340 traverse the membrane as a helical segment. Residues Tyr341–Gln432 lie on the Extracellular side of the membrane. N-linked (GlcNAc...) asparagine glycosylation occurs at Asn400. The helical transmembrane segment at Leu433–Thr453 threads the bilayer. At Gly454–Glu474 the chain is on the cytoplasmic side. A helical membrane pass occupies residues Ala475–Ala495. At Gly496–Ala508 the chain is on the extracellular side. Residues Thr509–Leu529 traverse the membrane as a helical segment. The Cytoplasmic portion of the chain corresponds to Lys530 to Tyr547. Residues Trp548–Leu568 form a helical membrane-spanning segment. Topologically, residues Ser569 to Tyr597 are extracellular. A helical membrane pass occupies residues Ala598–Leu618. The Cytoplasmic portion of the chain corresponds to Gly619–Ala635.

Belongs to the sodium:neurotransmitter symporter (SNF) (TC 2.A.22) family. SLC6A20 subfamily. As to quaternary structure, interacts with CLTRN. In terms of tissue distribution, detected only in kidney and lung.

It is found in the apical cell membrane. Does not show transporter activity with a range of tested amino acids including proline, glutamine, glutamic acid, leucine, alanine, histidine, glycine and arginine. This is Sodium- and chloride-dependent transporter XTRP3B (Slc6a20b) from Mus musculus (Mouse).